The primary structure comprises 268 residues: Eukaryotic translation initiation factor 3 subunit G-2 (268 aa).

Positions 187–265 constitute an RRM domain; that stretch reads SAVRISNLSE…LILCVEWSKP (79 aa).

This sequence belongs to the eIF-3 subunit G family. As to quaternary structure, component of the eukaryotic translation initiation factor 3 (eIF-3) complex. The eIF-3 complex interacts with pix.

Its subcellular location is the cytoplasm. Functionally, RNA-binding component of the eukaryotic translation initiation factor 3 (eIF-3) complex, which is involved in protein synthesis of a specialized repertoire of mRNAs and, together with other initiation factors, stimulates binding of mRNA and methionyl-tRNAi to the 40S ribosome. The eIF-3 complex specifically targets and initiates translation of a subset of mRNAs involved in cell proliferation. This subunit can bind 18S rRNA. The chain is Eukaryotic translation initiation factor 3 subunit G-2 from Drosophila willistoni (Fruit fly).